Consider the following 565-residue polypeptide: MSEQDKNVKLSDNERMKRESNFLRGTIATDLKDEITGGFTADNFQLIRFHGMYQQDDRDIRGERAKQKLEPLHNVMLRARMPGGIIKPEQWLAIDKFAEEKTSYGSIRLTTRQTFQFHGVLKPNIKGMHQLLDSVGIDSIATAGDVNRNVLCTTNPVESELHQEAYEWAAKISEHLLPKTKAYAEIWLNGEKAETTEEPILGSNYLPRKFKTTVTIPPNNEVDVHANDLNFVAIAENGKLIGFNVLVGGGLAMTHGDTATYPRKADDFGFIPLEHTLKIAEHVVSVQRDWGNRSNRKNAKTKYTLDRVGVDVFKAEVEKRAGVEFASSRPYKFTHRGDRIGWVEGIDGKHHLTLFIQSGRILDYPDKPLKTGCRKIAEVHQGDMRMTANQNLIIAGVAANQKAVIEEIARNHGLIDDKDTEQRKNSMACVALPTCPLAMAEAERYLPSLVEKIEALLAKHGVPNDSIIMRVVGCPNGCGRAMLAEAGLVGKGPGKYNVYLGGNLEGTRIPKLYLENVGEDVYLAAFDELIGQWVNERNDGECFGDFVIRKGIVAEVKVSVTDFHA.

Residues C429, C435, C474, and C478 each coordinate [4Fe-4S] cluster. Residue C478 coordinates siroheme.

This sequence belongs to the nitrite and sulfite reductase 4Fe-4S domain family. In terms of assembly, alpha(8)-beta(8). The alpha component is a flavoprotein, the beta component is a hemoprotein. Requires siroheme as cofactor. It depends on [4Fe-4S] cluster as a cofactor.

The enzyme catalyses hydrogen sulfide + 3 NADP(+) + 3 H2O = sulfite + 3 NADPH + 4 H(+). Its pathway is sulfur metabolism; hydrogen sulfide biosynthesis; hydrogen sulfide from sulfite (NADPH route): step 1/1. Component of the sulfite reductase complex that catalyzes the 6-electron reduction of sulfite to sulfide. This is one of several activities required for the biosynthesis of L-cysteine from sulfate. This is Sulfite reductase [NADPH] hemoprotein beta-component from Pseudoalteromonas translucida (strain TAC 125).